The sequence spans 368 residues: Geranylgeranyl pyrophosphate synthase dpfgD (368 aa).

Isopentenyl diphosphate-binding residues include Lys-48, Arg-51, and His-80. Mg(2+) contacts are provided by Asp-87 and Asp-91. Arg-96 lines the dimethylallyl diphosphate pocket. Residue Arg-97 participates in isopentenyl diphosphate binding. Residues Lys-174, Thr-175, and Gln-208 each contribute to the dimethylallyl diphosphate site. Asp-211 is a binding site for Mg(2+). Positions 215, 225, and 235 each coordinate dimethylallyl diphosphate.

Belongs to the FPP/GGPP synthase family. It depends on Mg(2+) as a cofactor.

It carries out the reaction isopentenyl diphosphate + dimethylallyl diphosphate = (2E)-geranyl diphosphate + diphosphate. The enzyme catalyses isopentenyl diphosphate + (2E)-geranyl diphosphate = (2E,6E)-farnesyl diphosphate + diphosphate. It catalyses the reaction isopentenyl diphosphate + (2E,6E)-farnesyl diphosphate = (2E,6E,10E)-geranylgeranyl diphosphate + diphosphate. Its pathway is secondary metabolite biosynthesis; terpenoid biosynthesis. Geranylgeranyl pyrophosphate synthase; part of the gene cluster that mediates the biosynthesis of diterpenoid pyrones. The first step of the pathway is the synthesis of the alpha-pyrone moiety by the polyketide synthase dpfgA via condensation of one acetyl-CoA starter unit with 3 malonyl-CoA units and 2 methylations. The alpha-pyrone is then combined with geranylgeranyl pyrophosphate (GGPP) formed by the GGPP synthase dpfgD through the action of the prenyltransferase dpfgC to yield a linear alpha-pyrone diterpenoid. Subsequent steps in the diterpenoid pyrone biosynthetic pathway involve the decalin core formation, which is initiated by the epoxidation of the C10-C11 olefin by the FAD-dependent oxidoreductase dpfgE, and is followed by a cyclization cascade catalyzed by the terpene cyclase dpfgB. The short chain dehydrogenase/reductase dpfgG then oxidizes the 8S hydroxy group to a ketone and the short chain dehydrogenase/reductase dpfgH reduces the ketone to the 8R hydroxy group to yield higginsianin B. Higginsianin B is further methylated by the methyltransferase dpfgI to produce the intermediate named FDDP B. The cytochrome P450 monooxygenase dfgpJ then catalyzes a three-step oxidation at C-27 to generate a carboxylic acid as well as C-26 hydroxylation. Finally, methyltransferase dpfgK methylates the carboxylic acid generated by dpfgJ, yielding the final diterpenoid pyrones from the pathway which were named FDDP D and FDDP E. This Gibberella zeae (strain ATCC MYA-4620 / CBS 123657 / FGSC 9075 / NRRL 31084 / PH-1) (Wheat head blight fungus) protein is Geranylgeranyl pyrophosphate synthase dpfgD.